Reading from the N-terminus, the 582-residue chain is Adenine deaminase (582 aa).

The protein belongs to the metallo-dependent hydrolases superfamily. Adenine deaminase family. Mn(2+) serves as cofactor.

The catalysed reaction is adenine + H2O + H(+) = hypoxanthine + NH4(+). This is Adenine deaminase from Oceanobacillus iheyensis (strain DSM 14371 / CIP 107618 / JCM 11309 / KCTC 3954 / HTE831).